The primary structure comprises 62 residues: uncharacterized protein (62 aa).

The tract at residues 1–62 (MTSTQNLKDK…PPKKSLSQLP (62 aa)) is disordered. A compositionally biased stretch (basic and acidic residues) spans 7 to 29 (LKDKFEEEIRQQKEGKGKKEKVW). A compositionally biased stretch (polar residues) spans 32-43 (HSDSSYNKQTAV).

This is an uncharacterized protein from Dictyostelium discoideum (Social amoeba).